Reading from the N-terminus, the 457-residue chain is ATP-dependent protease ATPase subunit HslU (457 aa).

Residues valine 21, 63–68 (GVGKTE), aspartate 269, glutamate 335, and arginine 407 contribute to the ATP site.

It belongs to the ClpX chaperone family. HslU subfamily. As to quaternary structure, a double ring-shaped homohexamer of HslV is capped on each side by a ring-shaped HslU homohexamer. The assembly of the HslU/HslV complex is dependent on binding of ATP.

It is found in the cytoplasm. ATPase subunit of a proteasome-like degradation complex; this subunit has chaperone activity. The binding of ATP and its subsequent hydrolysis by HslU are essential for unfolding of protein substrates subsequently hydrolyzed by HslV. HslU recognizes the N-terminal part of its protein substrates and unfolds these before they are guided to HslV for hydrolysis. The chain is ATP-dependent protease ATPase subunit HslU from Desulfotalea psychrophila (strain LSv54 / DSM 12343).